A 510-amino-acid polypeptide reads, in one-letter code: 2,3-bisphosphoglycerate-independent phosphoglycerate mutase (510 aa).

Positions 14 and 64 each coordinate Mn(2+). Residue serine 64 is the Phosphoserine intermediate of the active site. Substrate is bound by residues histidine 125, 155–156 (RD), arginine 187, arginine 193, 259–262 (RADR), and lysine 332. 5 residues coordinate Mn(2+): aspartate 399, histidine 403, aspartate 440, histidine 441, and histidine 459.

The protein belongs to the BPG-independent phosphoglycerate mutase family. As to quaternary structure, monomer. Requires Mn(2+) as cofactor.

It catalyses the reaction (2R)-2-phosphoglycerate = (2R)-3-phosphoglycerate. Its pathway is carbohydrate degradation; glycolysis; pyruvate from D-glyceraldehyde 3-phosphate: step 3/5. Catalyzes the interconversion of 2-phosphoglycerate and 3-phosphoglycerate. The polypeptide is 2,3-bisphosphoglycerate-independent phosphoglycerate mutase (Pseudomonas savastanoi pv. phaseolicola (strain 1448A / Race 6) (Pseudomonas syringae pv. phaseolicola (strain 1448A / Race 6))).